Consider the following 118-residue polypeptide: Ribosomal silencing factor RsfS (118 aa).

The protein belongs to the Iojap/RsfS family. Interacts with ribosomal protein uL14 (rplN).

Its subcellular location is the cytoplasm. Functions as a ribosomal silencing factor. Interacts with ribosomal protein uL14 (rplN), blocking formation of intersubunit bridge B8. Prevents association of the 30S and 50S ribosomal subunits and the formation of functional ribosomes, thus repressing translation. This chain is Ribosomal silencing factor RsfS, found in Bacillus subtilis (strain 168).